A 439-amino-acid chain; its full sequence is UPF0229 protein Nham_0975 (439 aa).

The segment at 39–106 (RSGRISDADG…AGTPDPSMKD (68 aa)) is disordered. Residues 58 to 76 (STDEPRFEAAKDSGRREHV) show a composition bias toward basic and acidic residues.

Belongs to the UPF0229 family.

This Nitrobacter hamburgensis (strain DSM 10229 / NCIMB 13809 / X14) protein is UPF0229 protein Nham_0975.